A 1011-amino-acid chain; its full sequence is DNA-directed RNA polymerase 2, chloroplastic/mitochondrial (1011 aa).

A disordered region spans residues 307 to 326 (KGDDNEESGGVENETSMKEQ). Active-site residues include D712, K787, and D944.

This sequence belongs to the phage and mitochondrial RNA polymerase family. Interacts with NIP1 and NIP2.

The protein resides in the plastid. Its subcellular location is the chloroplast. It localises to the mitochondrion. It catalyses the reaction RNA(n) + a ribonucleoside 5'-triphosphate = RNA(n+1) + diphosphate. In terms of biological role, DNA-dependent RNA polymerase catalyzes the transcription of DNA into RNA using the four ribonucleoside triphosphates as substrates. The sequence is that of DNA-directed RNA polymerase 2, chloroplastic/mitochondrial (RPOT2) from Arabidopsis thaliana (Mouse-ear cress).